Reading from the N-terminus, the 1167-residue chain is C5a peptidase (1167 aa).

Positions 1 to 31 (MRKKQKLPFDKLAIALMSTSILLNAQSDIKA) are cleaved as a signal peptide. The span at 34 to 52 (VTEDTPVTEQAVETPQPTA) shows a compositional bias: polar residues. A disordered region spans residues 34–73 (VTEDTPVTEQAVETPQPTAVSEEVPSSKETKTPQTPDDAE). Positions 99–581 (KATIRDLNDP…AGAVDAKKAS (483 aa)) constitute a Peptidase S8 domain. Residues Asp-130, His-193, and Ser-512 each act as charge relay system in the active site. The segment at 1029 to 1133 (EGHSNKPEQD…RDQLPTTNDK (105 aa)) is disordered. 4 tandem repeats follow at residues 1034-1050 (KPEQDGSGQTPDKKPEA), 1051-1067 (KPEQDGSDQAPDKKPEA), 1068-1084 (KPEQDGSGQTPDKKPET), and 1085-1101 (KPEKDSSGQTPGKTPQK). The interval 1034–1101 (KPEQDGSGQT…GQTPGKTPQK (68 aa)) is 4 X 17 AA tandem repeats. Basic and acidic residues-rich tracts occupy residues 1044–1071 (PDKKPEAKPEQDGSDQAPDKKPEAKPEQ) and 1078–1090 (PDKKPETKPEKDS). Composition is skewed to polar residues over residues 1092 to 1106 (GQTPGKTPQKGQPSR) and 1120 to 1130 (KASTRDQLPTT). An LPXTG sorting signal motif is present at residues 1127–1131 (LPTTN). Thr-1130 carries the post-translational modification Pentaglycyl murein peptidoglycan amidated threonine. Positions 1131 to 1167 (NDKDTNRLHLLKLVMTTFFFGLVAHIFKTKRQKETKK) are cleaved as a propeptide — removed by sortase.

Belongs to the peptidase S8 family. Cleaved by SpeB protease; leading to its degradation. Degradation by SpeB is probably strictly regulated to preserve integrity of C5a peptidase.

It localises to the secreted. The protein localises to the cell wall. It catalyses the reaction The primary cleavage site is at 67-His-|-Lys-68 in human C5a with a minor secondary cleavage site at 58-Ala-|-Ser-59.. This virulence factor of S.pyogenes specifically cleaves the human serum chemotaxin C5a at '68-Lys-|-Asp-69' bond near its C-terminus, destroying its ability to serve as a chemoattractant. The polypeptide is C5a peptidase (scpA) (Streptococcus pyogenes).